The following is a 121-amino-acid chain: Protein yippee (121 aa).

A Yippee domain is found at lysine 13–glutamate 110. Cysteine 17, cysteine 20, cysteine 73, and cysteine 76 together coordinate Zn(2+).

The protein belongs to the yippee family. Interacts with hemolin.

This is Protein yippee from Drosophila melanogaster (Fruit fly).